Consider the following 272-residue polypeptide: Bifunctional protein FolD (272 aa).

NADP(+) is bound by residues G155 to S157, S182, and I223.

Belongs to the tetrahydrofolate dehydrogenase/cyclohydrolase family. In terms of assembly, homodimer.

The catalysed reaction is (6R)-5,10-methylene-5,6,7,8-tetrahydrofolate + NADP(+) = (6R)-5,10-methenyltetrahydrofolate + NADPH. It carries out the reaction (6R)-5,10-methenyltetrahydrofolate + H2O = (6R)-10-formyltetrahydrofolate + H(+). Its pathway is one-carbon metabolism; tetrahydrofolate interconversion. Functionally, catalyzes the oxidation of 5,10-methylenetetrahydrofolate to 5,10-methenyltetrahydrofolate and then the hydrolysis of 5,10-methenyltetrahydrofolate to 10-formyltetrahydrofolate. The chain is Bifunctional protein FolD from Fervidobacterium nodosum (strain ATCC 35602 / DSM 5306 / Rt17-B1).